Reading from the N-terminus, the 60-residue chain is Large ribosomal subunit protein bL32 (60 aa).

The tract at residues 1–60 is disordered; it reads MAVQQNKKSPSKRGMHRSHDFLVNPSTAIEPTTGETHLRHHISPNGFYRGRKVLKTKADE. Residues 24–35 show a composition bias toward polar residues; it reads NPSTAIEPTTGE. Positions 49–60 are enriched in basic residues; that stretch reads RGRKVLKTKADE.

The protein belongs to the bacterial ribosomal protein bL32 family.

The sequence is that of Large ribosomal subunit protein bL32 from Bordetella petrii (strain ATCC BAA-461 / DSM 12804 / CCUG 43448).